The chain runs to 470 residues: Nuclear receptor ROR-beta (470 aa).

The segment at residues 18–93 (VIPCKICGDK…LGMSRDAVKF (76 aa)) is a DNA-binding region (nuclear receptor). 2 consecutive NR C4-type zinc fingers follow at residues 21–41 (CKIC…CEGC) and 57–81 (CPRQ…LQKC). A compositionally biased stretch (basic and acidic residues) spans 104-117 (LYAEVQKHQQRLQE). Positions 104 to 127 (LYAEVQKHQQRLQEQRQQQSGEAE) are disordered. Residues 222-460 (EIDRIAQNII…TLFPPLYKEL (239 aa)) form the NR LBD domain. An AF-2 motif is present at residues 456-461 (LYKELF).

The protein belongs to the nuclear hormone receptor family. NR1 subfamily. In terms of assembly, monomer. Interacts with CRX.

The protein localises to the nucleus. It is found in the nucleoplasm. Functionally, nuclear receptor that binds DNA as a monomer to ROR response elements (RORE) containing a single core motif half-site 5'-AGGTCA-3' preceded by a short A-T-rich sequence. Considered to have intrinsic transcriptional activity, have some natural ligands such as all-trans retinoic acid (ATRA) and other retinoids which act as inverse agonists repressing the transcriptional activity. Required for normal postnatal development of rod and cone photoreceptor cells. Modulates rod photoreceptors differentiation at least by inducing the transcription factor NRL-mediated pathway. In cone photoreceptor cells, regulates transcription of OPN1SW. Involved in the regulation of the period length and stability of the circadian rhythm. May control cytoarchitectural patterning of neocortical neurons during development. May act in a dose-dependent manner to regulate barrel formation upon innervation of layer IV neurons by thalamocortical axons. May play a role in the suppression of osteoblastic differentiation through the inhibition of RUNX2 transcriptional activity. Isoform 1 is critical for hindlimb motor control and for the differentiation of amacrine and horizontal cells in the retina. Regulates the expression of PTF1A synergistically with FOXN4. The protein is Nuclear receptor ROR-beta (RORB) of Homo sapiens (Human).